The sequence spans 90 residues: Caspase recruitment domain-containing protein 18 (90 aa).

A CARD domain is found at 1–90 (MADQLLRKKR…PQLASKMGLH (90 aa)).

Interacts with pro-CASP1. Interacts with CARD8. In terms of tissue distribution, primarily expressed in the heart and placenta.

Functionally, inhibits generation of IL-1-beta by interacting with caspase-1 and preventing its association with RIP2. Down-regulates the release of IL1B. This is Caspase recruitment domain-containing protein 18 (CARD18) from Homo sapiens (Human).